The sequence spans 81 residues: Photosystem I iron-sulfur center (81 aa).

4Fe-4S ferredoxin-type domains are found at residues 2 to 31 (AHSV…MIPW) and 39 to 68 (IASA…VRVY). The [4Fe-4S] cluster site is built by C11, C14, C17, C21, C48, C51, C54, and C58.

As to quaternary structure, the eukaryotic PSI reaction center is composed of at least 11 subunits. [4Fe-4S] cluster serves as cofactor.

The protein localises to the plastid. Its subcellular location is the chloroplast thylakoid membrane. It catalyses the reaction reduced [plastocyanin] + hnu + oxidized [2Fe-2S]-[ferredoxin] = oxidized [plastocyanin] + reduced [2Fe-2S]-[ferredoxin]. Its function is as follows. Apoprotein for the two 4Fe-4S centers FA and FB of photosystem I (PSI); essential for photochemical activity. FB is the terminal electron acceptor of PSI, donating electrons to ferredoxin. The C-terminus interacts with PsaA/B/D and helps assemble the protein into the PSI complex. Required for binding of PsaD and PsaE to PSI. PSI is a plastocyanin-ferredoxin oxidoreductase, converting photonic excitation into a charge separation, which transfers an electron from the donor P700 chlorophyll pair to the spectroscopically characterized acceptors A0, A1, FX, FA and FB in turn. The protein is Photosystem I iron-sulfur center of Cycas taitungensis (Prince sago).